Here is a 387-residue protein sequence, read N- to C-terminus: Synaptotagmin-8 (387 aa).

Over 1–34 (MGHPPVSPSAPAPAGTTAIPGLIPDLVAGTPWPR) the chain is Extracellular. A helical; Signal-anchor for type III membrane protein transmembrane segment spans residues 35–55 (WALIAGALAAGVLLVSCLLCA). The Cytoplasmic portion of the chain corresponds to 56-387 (ACCCCRRHRK…LRLRLPLPHS (332 aa)). The interval 70–99 (KESVGLGSARGTTTTHLVQPDVDGLESSPG) is disordered. C2 domains follow at residues 103-219 (QWGC…EHWY) and 231-346 (QVGE…QHWA).

It belongs to the synaptotagmin family. As to quaternary structure, homodimer or homooligomer. Homodimerization and homooligomerization do not depend on Ca(2+). Interacts with SYNCRIP isoform 2 C-terminus. Binds inositol 1,3,4,5-tetrakisphosphate (IP4). Binds to AP2 in a Ca(2+)-independent manner. Interacts with STX1A, STX1B and STX2; the interaction is Ca(2+)-dependent.

Its subcellular location is the cell membrane. It localises to the cytoplasmic vesicle. It is found in the secretory vesicle. The protein localises to the acrosome. In terms of biological role, involved in the trafficking and exocytosis of secretory vesicles in non-neuronal tissues. Mediates Ca(2+)-regulation of exocytosis acrosomal reaction in sperm. May mediate Ca(2+)-regulation of exocytosis in insulin secreted cells. This Homo sapiens (Human) protein is Synaptotagmin-8 (SYT8).